We begin with the raw amino-acid sequence, 480 residues long: Oxysterol-binding protein-related protein 2 (480 aa).

The tract at residues 1 to 60 (MNGEEEFFDAVTGFDSDNSSGEFSEANQKVTGMIDLDTSKNNRIGKTGERPSQENGIQKH) is disordered. Over residues 15-30 (DSDNSSGEFSEANQKV) the composition is skewed to polar residues. Ser19 and Ser20 each carry phosphoserine. A 1,2-diacyl-sn-glycero-3-phospho-(1D-myo-inositol-4,5-bisphosphate) contacts are provided by residues Lys90, 178 to 179 (HH), and 427 to 431 (EEKQR).

Belongs to the OSBP family. In terms of assembly, monomer. Homotetramer; phosphatidylinositol-4,5-bisphosphate binding promotes formation of stable tetramers. Interacts with DIAPH1. Widely expressed.

Its subcellular location is the cytoplasm. The protein resides in the cytosol. It localises to the lipid droplet. It is found in the cell membrane. Functionally, intracellular transport protein that binds sterols and phospholipids and mediates lipid transport between intracellular compartments. Increases plasma membrane cholesterol levels and decreases phosphatidylinositol-4,5-bisphosphate levels in the cell membrane. Binds phosphoinositides, such as phosphatidylinositol-4,5-bisphosphate. Exhibits strong binding to phosphatidic acid and weak binding to phosphatidylinositol 3-phosphate. Binds cholesterol, dehydroergosterol, 22(R)-hydroxycholesterol and 25-hydroxycholesterol (in vitro). In Homo sapiens (Human), this protein is Oxysterol-binding protein-related protein 2 (OSBPL2).